Reading from the N-terminus, the 313-residue chain is tRNA dimethylallyltransferase (313 aa).

13–20 contacts ATP; the sequence is GPTASGKT. Substrate is bound at residue 15-20; that stretch reads TASGKT. Interaction with substrate tRNA regions lie at residues 38–41, 162–166, 243–248, and 276–283; these read DSAL, QRLSR, RCVGYR, and KRQITWLR.

It belongs to the IPP transferase family. Monomer. Mg(2+) is required as a cofactor.

The enzyme catalyses adenosine(37) in tRNA + dimethylallyl diphosphate = N(6)-dimethylallyladenosine(37) in tRNA + diphosphate. Catalyzes the transfer of a dimethylallyl group onto the adenine at position 37 in tRNAs that read codons beginning with uridine, leading to the formation of N6-(dimethylallyl)adenosine (i(6)A). The protein is tRNA dimethylallyltransferase of Aliivibrio salmonicida (strain LFI1238) (Vibrio salmonicida (strain LFI1238)).